The following is a 223-amino-acid chain: MTKNVLMLHGLAQSGDYFASKTKGFRAEMEKLGYKLYYPTAPNEFPPADVPDFLGEVIADAPGDGENTGVLAWLENDPSTGGYFIPQTTIDYLHNYVLENGPFAGIVGFSQGAGVAGYLATDFNGLLGLTTEEQPPLEFFMAVSGFRFQPQQYQEQYDLHPISVPSLHVQGELDTITEPAKVQGLYNSCTEDSRTLLMHSGGHFVPNSRGFVRKVAQWLQQLT.

Active-site charge relay system residues include Ser-110, Asp-174, and His-203.

The protein belongs to the AB hydrolase 3 family.

The protein localises to the cytoplasm. Its function is as follows. Serine hydrolase of unknown specificity. In Saccharomyces cerevisiae (strain ATCC 204508 / S288c) (Baker's yeast), this protein is Family of serine hydrolases 2 (FSH2).